A 276-amino-acid polypeptide reads, in one-letter code: Dermonecrotic toxin LarSicTox-alphaIB2c (276 aa).

H5 is a catalytic residue. Residues E25 and D27 each coordinate Mg(2+). Catalysis depends on H41, which acts as the Nucleophile. Intrachain disulfides connect C45–C51 and C47–C190. D85 is a binding site for Mg(2+). The N-linked (GlcNAc...) asparagine glycan is linked to N253.

This sequence belongs to the arthropod phospholipase D family. Class II subfamily. It depends on Mg(2+) as a cofactor. Expressed by the venom gland.

The protein resides in the secreted. It carries out the reaction an N-(acyl)-sphingosylphosphocholine = an N-(acyl)-sphingosyl-1,3-cyclic phosphate + choline. The enzyme catalyses an N-(acyl)-sphingosylphosphoethanolamine = an N-(acyl)-sphingosyl-1,3-cyclic phosphate + ethanolamine. The catalysed reaction is a 1-acyl-sn-glycero-3-phosphocholine = a 1-acyl-sn-glycero-2,3-cyclic phosphate + choline. It catalyses the reaction a 1-acyl-sn-glycero-3-phosphoethanolamine = a 1-acyl-sn-glycero-2,3-cyclic phosphate + ethanolamine. Dermonecrotic toxins cleave the phosphodiester linkage between the phosphate and headgroup of certain phospholipids (sphingolipid and lysolipid substrates), forming an alcohol (often choline) and a cyclic phosphate. This toxin acts on sphingomyelin (SM). It may also act on ceramide phosphoethanolamine (CPE), lysophosphatidylcholine (LPC) and lysophosphatidylethanolamine (LPE), but not on lysophosphatidylserine (LPS), and lysophosphatidylglycerol (LPG). It acts by transphosphatidylation, releasing exclusively cyclic phosphate products as second products. Induces dermonecrosis, hemolysis, increased vascular permeability, edema, inflammatory response, and platelet aggregation. This Loxosceles arizonica (Arizona brown spider) protein is Dermonecrotic toxin LarSicTox-alphaIB2c.